The sequence spans 187 residues: Large ribosomal subunit protein uL5 (187 aa).

It belongs to the universal ribosomal protein uL5 family. In terms of assembly, part of the 50S ribosomal subunit; part of the 5S rRNA/L5/L18/L25 subcomplex. Contacts the 5S rRNA and the P site tRNA. Forms a bridge to the 30S subunit in the 70S ribosome.

In terms of biological role, this is one of the proteins that bind and probably mediate the attachment of the 5S RNA into the large ribosomal subunit, where it forms part of the central protuberance. In the 70S ribosome it contacts protein S13 of the 30S subunit (bridge B1b), connecting the 2 subunits; this bridge is implicated in subunit movement. Contacts the P site tRNA; the 5S rRNA and some of its associated proteins might help stabilize positioning of ribosome-bound tRNAs. The sequence is that of Large ribosomal subunit protein uL5 from Corynebacterium diphtheriae (strain ATCC 700971 / NCTC 13129 / Biotype gravis).